A 287-amino-acid chain; its full sequence is ATP synthase gamma chain (287 aa).

It belongs to the ATPase gamma chain family. In terms of assembly, F-type ATPases have 2 components, CF(1) - the catalytic core - and CF(0) - the membrane proton channel. CF(1) has five subunits: alpha(3), beta(3), gamma(1), delta(1), epsilon(1). CF(0) has three main subunits: a, b and c.

The protein resides in the cell membrane. Produces ATP from ADP in the presence of a proton gradient across the membrane. The gamma chain is believed to be important in regulating ATPase activity and the flow of protons through the CF(0) complex. The chain is ATP synthase gamma chain from Brevibacillus brevis (strain 47 / JCM 6285 / NBRC 100599).